The sequence spans 418 residues: Serine/threonine transporter SstT (418 aa).

8 helical membrane passes run 21-41, 49-69, 83-103, 142-162, 190-210, 217-237, 299-319, and 331-351; these read ILIG…AAIA, FVGA…IASI, ILFL…VVSF, ALLN…GIAL, FAPL…GFGA, LLVV…PLIV, MAGA…TLGI, and VVAA…LLLI.

It belongs to the dicarboxylate/amino acid:cation symporter (DAACS) (TC 2.A.23) family.

The protein resides in the cell inner membrane. The enzyme catalyses L-serine(in) + Na(+)(in) = L-serine(out) + Na(+)(out). It carries out the reaction L-threonine(in) + Na(+)(in) = L-threonine(out) + Na(+)(out). Its function is as follows. Involved in the import of serine and threonine into the cell, with the concomitant import of sodium (symport system). The polypeptide is Serine/threonine transporter SstT (Yersinia pseudotuberculosis serotype O:1b (strain IP 31758)).